Here is a 117-residue protein sequence, read N- to C-terminus: Large ribosomal subunit protein bL19 (117 aa).

It belongs to the bacterial ribosomal protein bL19 family.

This protein is located at the 30S-50S ribosomal subunit interface and may play a role in the structure and function of the aminoacyl-tRNA binding site. The chain is Large ribosomal subunit protein bL19 from Phocaeicola vulgatus (strain ATCC 8482 / DSM 1447 / JCM 5826 / CCUG 4940 / NBRC 14291 / NCTC 11154) (Bacteroides vulgatus).